Reading from the N-terminus, the 376-residue chain is Pre-mRNA-splicing factor cwf25 (376 aa).

Residues 25-60 are a coiled coil; it reads KDEQAHKEEMKRVEQLRREIEEERQLLELHRLQEAA. Disordered stretches follow at residues 153–211 and 258–289; these read LMEK…DRNN and RTSRQYSRSPSPDFRTRNHQFHSRDSQPITQR. Positions 154 to 167 are enriched in basic and acidic residues; it reads MEKRKYSLDSDRKS. The span at 168-178 shows a compositional bias: basic residues; sequence KERRHRDRHHR. Basic and acidic residues predominate over residues 179 to 199; the sequence is SNQDRSRERSDNEQHSSDKRE. Ser266 and Ser268 each carry phosphoserine. Positions 286 to 334 form a coiled coil; sequence ITQRHTDIESRLQKMQDNAKELDESRRKKIELLEKKERDEEQFLEKERR.

Belongs to the CWC25 family. In terms of assembly, belongs to the 40S cdc5-associated complex (or cwf complex), a spliceosome sub-complex reminiscent of a late-stage spliceosome composed of the U2, U5 and U6 snRNAs and at least brr2, cdc5, cwf2/prp3, cwf3/syf1, cwf4/syf3, cwf5/ecm2, spp42/cwf6, cwf7/spf27, cwf8, cwf9, cwf10, cwf11, cwf12, prp45/cwf13, cwf14, cwf15, cwf16, cwf17, cwf18, cwf19, cwf20, cwf21, cwf22, cwf23, cwf24, cwf25, cwf26, cyp7/cwf27, cwf28, cwf29/ist3, lea1, msl1, prp5/cwf1, prp10, prp12/sap130, prp17, prp22, sap61, sap62, sap114, sap145, slu7, smb1, smd1, smd3, smf1, smg1 and syf2.

It is found in the nucleus. Its function is as follows. Involved in mRNA splicing. This chain is Pre-mRNA-splicing factor cwf25 (cwf25), found in Schizosaccharomyces pombe (strain 972 / ATCC 24843) (Fission yeast).